A 147-amino-acid chain; its full sequence is Large ribosomal subunit protein uL13 (147 aa).

Belongs to the universal ribosomal protein uL13 family. Part of the 50S ribosomal subunit.

This protein is one of the early assembly proteins of the 50S ribosomal subunit, although it is not seen to bind rRNA by itself. It is important during the early stages of 50S assembly. The chain is Large ribosomal subunit protein uL13 from Lactiplantibacillus plantarum (strain ATCC BAA-793 / NCIMB 8826 / WCFS1) (Lactobacillus plantarum).